Consider the following 212-residue polypeptide: Peptide methionine sulfoxide reductase MsrA (212 aa).

Cys52 is an active-site residue.

Belongs to the MsrA Met sulfoxide reductase family.

The catalysed reaction is L-methionyl-[protein] + [thioredoxin]-disulfide + H2O = L-methionyl-(S)-S-oxide-[protein] + [thioredoxin]-dithiol. It catalyses the reaction [thioredoxin]-disulfide + L-methionine + H2O = L-methionine (S)-S-oxide + [thioredoxin]-dithiol. Has an important function as a repair enzyme for proteins that have been inactivated by oxidation. Catalyzes the reversible oxidation-reduction of methionine sulfoxide in proteins to methionine. The polypeptide is Peptide methionine sulfoxide reductase MsrA (Salmonella agona (strain SL483)).